The primary structure comprises 306 residues: Mating type protein SmtA-1 (306 aa).

The alpha box DNA-binding region spans 49–104; the sequence is APKKKVNGFMGFRSYYSPLFSQFPQKARSPFMTILWQHDPFHNEWDFMCSVYSSIR.

It belongs to the MATALPHA1 family.

The protein localises to the nucleus. Mating type proteins are sequence specific DNA-binding proteins that act as master switches in fungal differentiation by controlling gene expression in a cell type-specific fashion. Transcriptional activator that induces the transcription of alpha-specific genes. The protein is Mating type protein SmtA-1 (SMTA1) of Sordaria macrospora (strain ATCC MYA-333 / DSM 997 / K(L3346) / K-hell).